Consider the following 316-residue polypeptide: MSDISKASLPKAIFLMGPTASGKTALAIELRKILPVELISVDSALIYKGMDIGTAKPNAEELLAAPHRLLDIRDPSQAYSAADFRRDALAEMADITAAGRIPLLVGGTMLYFKALLEGLSPLPSADPEVRARIEQQAAEQGWESLHRQLQEIDPVAAARIHPNDPQRLSRALEVFFISGKTLTELTQTSGDALPYQVHQFAIAPASRELLHQRIEQRFHQMLASGFEAEVRALFARGDLHTDLPSIRCVGYRQMWSYLGGEISYDEMVYRGVCATRQLAKRQITWLRGWEGVHWLDSEKPEQARDEVLQVVGAIAG.

17-24 (GPTASGKT) provides a ligand contact to ATP. Residue 19-24 (TASGKT) coordinates substrate. Interaction with substrate tRNA stretches follow at residues 42 to 45 (DSAL), 166 to 170 (QRLSR), 247 to 252 (RCVGYR), and 280 to 287 (KRQITWLR).

It belongs to the IPP transferase family. In terms of assembly, monomer. The cofactor is Mg(2+).

The enzyme catalyses adenosine(37) in tRNA + dimethylallyl diphosphate = N(6)-dimethylallyladenosine(37) in tRNA + diphosphate. Catalyzes the transfer of a dimethylallyl group onto the adenine at position 37 in tRNAs that read codons beginning with uridine, leading to the formation of N6-(dimethylallyl)adenosine (i(6)A). The protein is tRNA dimethylallyltransferase of Escherichia coli O157:H7.